Consider the following 479-residue polypeptide: MSVCTEIDYKLYTELKKIAGNSLFLFNENGDFTEVVLNSSFKFLVPIGFFSSIDIPLKKPIEYKNNNNNIEHSKNIILPNLYPFQKHVVSEVLLSMEKKNKHKRPTYITLHLACGFGKTITSCYLLSLHKKKAVICLPNKMLINQWKRAIESINMDHIVSVDGVSNLLKEMVKKTADILIIVSRHLLNEEFCKKIYLNYDIFILDESHMYNLMNNSAVTKFLTYYPPKVCYFLTATPRKVNRIYCNDIINVSNSLELKKYIKIVEFFFETYSSDTIKQMVKKLNTNYNKYHMYTEKILAEDVPRNELILDTIIYDFNKMLINRLIIVTKLRKHMMFFYDRLSEKFGLDVVYLGDAKNKNISDIVKKIKSIDRFIFISTTNYSGTGLDVPTLDSLVICSAVMNSMQIEQILGRICRSSVSKTRTVIVFPNTSIKEIKHMVGFFTQKIITLAIEKLNFKKIEKKGKKKELALCKAFNLQTH.

Residues 99-255 enclose the Helicase ATP-binding domain; the sequence is KNKHKRPTYI…NDIINVSNSL (157 aa). 112 to 119 serves as a coordination point for ATP; sequence LACGFGKT. Residues 205-208 carry the DESH box motif; it reads DESH. In terms of domain architecture, Helicase C-terminal spans 308–469; that stretch reads ILDTIIYDFN…EKKGKKKELA (162 aa).

Belongs to the helicase family. Poxviruses subfamily. Interacts with G2. Might be part of a transcription complex composed at least of G2, A18, and H5.

The protein resides in the virion. In terms of biological role, DNA helicase which seems to act as a postreplicative transcription termination factor. Involved in ATP-dependent release of nascent RNA. Forms a stable complex with single-stranded DNA, and to a lesser extent RNA. The chain is Transcript termination protein A18 from Homo sapiens (Human).